We begin with the raw amino-acid sequence, 396 residues long: Unsaturated chondroitin disaccharide hydrolase (396 aa).

The active-site Nucleophile is the Asp113. Residues Asp113, Asp173, Gly231, Thr233, Arg245, Trp249, Ser363, and Ser366 each coordinate substrate. The active-site Proton donor is Asp173.

It belongs to the glycosyl hydrolase 88 family. Monomer.

The catalysed reaction is beta-D-4-deoxy-Delta(4)-GlcpA-(1-&gt;3)-beta-D-GalpNAc6S + H2O = N-acetyl-beta-D-galactosamine 6-sulfate + 5-dehydro-4-deoxy-D-glucuronate. In terms of biological role, catalyzes the hydrolysis of unsaturated hyaluronate and chondroitin disaccharides. Also degrades unsaturated heparin disaccharides. Releases 4-deoxy-4,5-didehydro D-glucuronic acid or 4-deoxy-4,5-didehydro L-iduronic acid from chondroitin disaccharides, hyaluronan disaccharides and heparin disaccharides and cleaves both glycosidic (1-&gt;3) and (1-&gt;4) bonds. Prefers sulfated glycosaminoglycans compared to unsulfated glycosaminoglycans. Probably required for mammalian cells invasion through the degradation of extracellular sulfated glycosaminoglycans such as chondroitin and hyaluronan. This Streptococcus pneumoniae (strain ATCC BAA-255 / R6) protein is Unsaturated chondroitin disaccharide hydrolase (ugl).